A 423-amino-acid chain; its full sequence is Phosphoribosylamine--glycine ligase (423 aa).

The ATP-grasp domain maps to 107 to 312; sequence KAFADRYGLP…LVPYLVACAN (206 aa). 133–193 lines the ATP pocket; it reads LELFEPPYVI…EEFLEGEIGS (61 aa). Residues Glu270, Glu282, and Asn284 each coordinate Mg(2+). Glu270, Glu282, and Asn284 together coordinate Mn(2+).

The protein belongs to the GARS family. Requires Mg(2+) as cofactor. Mn(2+) serves as cofactor.

The catalysed reaction is 5-phospho-beta-D-ribosylamine + glycine + ATP = N(1)-(5-phospho-beta-D-ribosyl)glycinamide + ADP + phosphate + H(+). Its pathway is purine metabolism; IMP biosynthesis via de novo pathway; N(1)-(5-phospho-D-ribosyl)glycinamide from 5-phospho-alpha-D-ribose 1-diphosphate: step 2/2. In Phenylobacterium zucineum (strain HLK1), this protein is Phosphoribosylamine--glycine ligase.